The primary structure comprises 325 residues: CRISPR-associated endonuclease Cas1 3 (325 aa).

Mn(2+)-binding residues include glutamate 152, histidine 217, and glutamate 232.

This sequence belongs to the CRISPR-associated endonuclease Cas1 family. In terms of assembly, homodimer, forms a heterotetramer with a Cas2 homodimer. It depends on Mg(2+) as a cofactor. Mn(2+) serves as cofactor.

CRISPR (clustered regularly interspaced short palindromic repeat), is an adaptive immune system that provides protection against mobile genetic elements (viruses, transposable elements and conjugative plasmids). CRISPR clusters contain spacers, sequences complementary to antecedent mobile elements, and target invading nucleic acids. CRISPR clusters are transcribed and processed into CRISPR RNA (crRNA). Acts as a dsDNA endonuclease. Involved in the integration of spacer DNA into the CRISPR cassette. The protein is CRISPR-associated endonuclease Cas1 3 of Thermodesulfovibrio yellowstonii (strain ATCC 51303 / DSM 11347 / YP87).